The chain runs to 103 residues: MAQFVRNLVEKTPALVNAAVTYSKPRLATFWYYAKVELVPPTPAEIPRAIQSLKKIVNSAQTGSFKQLTVKEAVLNGLVATEVLMWFYVGEIIGKRGIIGYDV.

Position 2 is an N-acetylalanine (A2). Residues K11, K24, K35, and K54 each carry the N6-acetyllysine modification.

The protein belongs to the ATPase g subunit family. As to quaternary structure, component of the ATP synthase complex composed at least of ATP5F1A/subunit alpha, ATP5F1B/subunit beta, ATP5MC1/subunit c (homooctomer), MT-ATP6/subunit a, MT-ATP8/subunit 8, ATP5ME/subunit e, ATP5MF/subunit f, ATP5MG/subunit g, ATP5MK/subunit k, ATP5MJ/subunit j, ATP5F1C/subunit gamma, ATP5F1D/subunit delta, ATP5F1E/subunit epsilon, ATP5PF/subunit F6, ATP5PB/subunit b, ATP5PD/subunit d, ATP5PO/subunit OSCP. ATP synthase complex consists of a soluble F(1) head domain (subunits alpha(3) and beta(3)) - the catalytic core - and a membrane F(0) domain - the membrane proton channel (subunits c, a, 8, e, f, g, k and j). These two domains are linked by a central stalk (subunits gamma, delta, and epsilon) rotating inside the F1 region and a stationary peripheral stalk (subunits F6, b, d, and OSCP).

Its subcellular location is the mitochondrion. The protein resides in the mitochondrion inner membrane. Subunit g, of the mitochondrial membrane ATP synthase complex (F(1)F(0) ATP synthase or Complex V) that produces ATP from ADP in the presence of a proton gradient across the membrane which is generated by electron transport complexes of the respiratory chain. ATP synthase complex consist of a soluble F(1) head domain - the catalytic core - and a membrane F(1) domain - the membrane proton channel. These two domains are linked by a central stalk rotating inside the F(1) region and a stationary peripheral stalk. During catalysis, ATP synthesis in the catalytic domain of F(1) is coupled via a rotary mechanism of the central stalk subunits to proton translocation. In vivo, can only synthesize ATP although its ATP hydrolase activity can be activated artificially in vitro. Part of the complex F(0) domain. This chain is ATP synthase F(0) complex subunit g, mitochondrial, found in Homo sapiens (Human).